The primary structure comprises 199 residues: Small ribosomal subunit protein eS1 (199 aa).

Belongs to the eukaryotic ribosomal protein eS1 family.

The polypeptide is Small ribosomal subunit protein eS1 (Pyrococcus abyssi (strain GE5 / Orsay)).